Here is a 788-residue protein sequence, read N- to C-terminus: Putative wall-associated receptor kinase-like 11 (788 aa).

Positions M1–S27 are cleaved as a signal peptide. Topologically, residues L28–R375 are extracellular. 9 N-linked (GlcNAc...) asparagine glycosylation sites follow: N65, N80, N121, N159, N233, N253, N278, N295, and N310. Positions C306–C369 are atypical EGF-like. 3 disulfide bridges follow: C308/C321, C343/C360, and C354/C369. N-linked (GlcNAc...) asparagine glycosylation is present at N372. A helical membrane pass occupies residues V376–W396. The Cytoplasmic segment spans residues L397–I788. Residues F451–L726 enclose the Protein kinase domain. ATP contacts are provided by residues L457–V465 and K479. A Phosphotyrosine modification is found at Y524. Catalysis depends on D576, which acts as the Proton acceptor. T610 and T615 each carry phosphothreonine. Y623 is subject to Phosphotyrosine.

The protein belongs to the protein kinase superfamily. Ser/Thr protein kinase family.

It is found in the membrane. The catalysed reaction is L-seryl-[protein] + ATP = O-phospho-L-seryl-[protein] + ADP + H(+). It catalyses the reaction L-threonyl-[protein] + ATP = O-phospho-L-threonyl-[protein] + ADP + H(+). In terms of biological role, putative serine/threonine-protein kinase that may function as a signaling receptor of extracellular matrix component. The chain is Putative wall-associated receptor kinase-like 11 (WAKL11) from Arabidopsis thaliana (Mouse-ear cress).